The chain runs to 185 residues: Ribosome-recycling factor (185 aa).

Belongs to the RRF family.

It localises to the cytoplasm. Responsible for the release of ribosomes from messenger RNA at the termination of protein biosynthesis. May increase the efficiency of translation by recycling ribosomes from one round of translation to another. The polypeptide is Ribosome-recycling factor (Corynebacterium diphtheriae (strain ATCC 700971 / NCTC 13129 / Biotype gravis)).